We begin with the raw amino-acid sequence, 706 residues long: Cyclic nucleotide-gated channel alpha-3 (706 aa).

Residues 1–189 lie on the Cytoplasmic side of the membrane; it reads MAKISTQYSH…MDPSSNMYYH (189 aa). The tract at residues 113–177 is disordered; that stretch reads RESHVQFNVG…PKKEEKKKDS (65 aa). Residues 147–177 are compositionally biased toward basic and acidic residues; it reads SEKDDKAKKEEKEKKEEKKENPKKEEKKKDS. A helical membrane pass occupies residues 190–211; the sequence is WLTVIAVPVFYNWCLLVCRACF. Residues 212 to 217 are Extracellular-facing; the sequence is DELQSE. The chain crosses the membrane as a helical span at residues 218 to 238; sequence HLMLWLVLDYSADILYGMDML. Residues 239 to 265 lie on the Cytoplasmic side of the membrane; the sequence is VRARTGFLEQGLMVMDASRLWKHYTQT. The helical transmembrane segment at 266 to 285 threads the bilayer; that stretch reads LHFKLDVLSLVPTDLAYFKL. The Extracellular portion of the chain corresponds to 286-289; the sequence is GMNY. The helical transmembrane segment at 290-307 threads the bilayer; sequence PELRFNRLLKLARLFEFF. Topologically, residues 308 to 317 are cytoplasmic; that stretch reads DRTETRTNYP. An ion conduction pathway region spans residues 317–425; it reads PNMFRIGNLV…GNVGSMISNM (109 aa). Residues 318–340 traverse the membrane as a helical segment; the sequence is NMFRIGNLVLYILIIIHWNACIY. Topologically, residues 341–366 are extracellular; sequence FAISKFIGFGTDSWVYPNVSNPEYGR. N-linked (GalNAc...) asparagine glycosylation is present at Asn358. 2 consecutive transmembrane segments (helical) span residues 367 to 397 and 398 to 422; these read LSRK…DEEY and LFVV…GSMI. Residues 384-387 form a selectivity filter region; the sequence is TIGE. At 423–706 the chain is on the cytoplasmic side; it reads SNMNASRAEF…DAPQTEASQP (284 aa). The C-linker stretch occupies residues 427–504; sequence ASRAEFQAKI…TLRKVRIFQD (78 aa). The segment at 507–627 is cyclic nucleotide-binding domain; sequence AGLLVELVLK…EEKGRQILMK (121 aa). Residues Gly567, Glu568, Ser570, Arg583, Thr584, and Asp628 each coordinate 3',5'-cyclic GMP. Residues 645–688 adopt a coiled-coil conformation; the sequence is IEEKVEHLETSLDSLQTRFARLLAEYNATQMKVKQRLSQLESQV. Residues 685–706 form a disordered region; the sequence is ESQVKMGLPPDGDAPQTEASQP.

It belongs to the cyclic nucleotide-gated cation channel (TC 1.A.1.5) family. CNGA3 subfamily. In terms of assembly, forms heterotetrameric channels composed of CNGA3 and CNGB3 subunits with 3:1 stoichiometry. As to expression, testis, kidney, retinal cone (at protein level) and heart.

Its subcellular location is the cell membrane. It catalyses the reaction Ca(2+)(in) = Ca(2+)(out). The catalysed reaction is Na(+)(in) = Na(+)(out). The enzyme catalyses K(+)(in) = K(+)(out). It carries out the reaction NH4(+)(in) = NH4(+)(out). It catalyses the reaction Rb(+)(in) = Rb(+)(out). The catalysed reaction is Li(+)(in) = Li(+)(out). The enzyme catalyses Cs(+)(in) = Cs(+)(out). Ca(2+) influx is inhibited by extracellular Mg(2+) ions. Functionally, pore-forming subunit of the cone cyclic nucleotide-gated channel. Mediates cone photoresponses at bright light converting transient changes in intracellular cGMP levels into electrical signals. In the dark, cGMP levels are high and keep the channel open enabling a steady inward current carried by Na(+) and Ca(2+) ions that leads to membrane depolarization and neurotransmitter release from synaptic terminals. Upon photon absorption cGMP levels decline leading to channel closure and membrane hyperpolarization that ultimately slows neurotransmitter release and signals the presence of light, the end point of the phototransduction cascade. Pore-forming subunit of the gustatory cyclic nucleotide-gated channel. In the taste buds, may sense oral extracellular pH and conduct ion currents that modulate the excitability of taste cells. Conducts cGMP- and cAMP-gated ion currents, with permeability for monovalent and divalent cations. This is Cyclic nucleotide-gated channel alpha-3 from Bos taurus (Bovine).